A 433-amino-acid chain; its full sequence is D-amino acid dehydrogenase (433 aa).

3–17 (VLVLGSGVIGTASAY) provides a ligand contact to FAD.

It belongs to the DadA oxidoreductase family. The cofactor is FAD.

The enzyme catalyses a D-alpha-amino acid + A + H2O = a 2-oxocarboxylate + AH2 + NH4(+). It functions in the pathway amino-acid degradation; D-alanine degradation; NH(3) and pyruvate from D-alanine: step 1/1. Oxidative deamination of D-amino acids. The chain is D-amino acid dehydrogenase from Pseudomonas putida (strain W619).